Consider the following 164-residue polypeptide: Phosphopantetheine adenylyltransferase (164 aa).

Residue serine 11 coordinates substrate. ATP is bound by residues 11–12 (SF) and histidine 19. Residues lysine 43, leucine 75, and arginine 89 each coordinate substrate. ATP-binding positions include 90 to 92 (GLR), glutamate 100, and 125 to 131 (YGYLSSS).

The protein belongs to the bacterial CoaD family. In terms of assembly, homohexamer. The cofactor is Mg(2+).

Its subcellular location is the cytoplasm. It catalyses the reaction (R)-4'-phosphopantetheine + ATP + H(+) = 3'-dephospho-CoA + diphosphate. It participates in cofactor biosynthesis; coenzyme A biosynthesis; CoA from (R)-pantothenate: step 4/5. Its function is as follows. Reversibly transfers an adenylyl group from ATP to 4'-phosphopantetheine, yielding dephospho-CoA (dPCoA) and pyrophosphate. This Geobacter sulfurreducens (strain ATCC 51573 / DSM 12127 / PCA) protein is Phosphopantetheine adenylyltransferase.